A 556-amino-acid polypeptide reads, in one-letter code: PTS system fructose-specific EIIB'BC component (556 aa).

2 consecutive PTS EIIB type-2 domains span residues 1–85 (MKLF…LANG) and 106–201 (IVAV…KAFK). The active-site Phosphocysteine intermediate; for EIIB activity is C112. The residue at position 112 (C112) is a Phosphocysteine; by EIIA. In terms of domain architecture, PTS EIIC type-2 spans 224 to 556 (VYKHLMTGVS…AIIKSKNNAE (333 aa)). The next 10 membrane-spanning stretches (helical) occupy residues 237-257 (PLVVAGGLLIAISFMFSFNVI), 275-295 (SGVAFKLMIAVFAGYVAFSIA), 302-322 (VGLIAGMLASEAGAGILGGII), 324-344 (GFLAGYVVKGLNVIIRLPASL), 349-369 (PILILPLLGSMIVGLTMIYLI), 390-410 (VNAIVLGAIIGAMMCIDMGGP), 431-451 (MAAAMAAGMVPPIGMTVATWI), 468-488 (FVLGLCFISEGALPFVAADPI), 490-510 (VIISSVIGGAVAGAISMGLNI), and 529-549 (LKYLGAIAIGALSTGVVYAII).

Its subcellular location is the cell inner membrane. It catalyses the reaction D-fructose(out) + N(pros)-phospho-L-histidyl-[protein] = D-fructose 1-phosphate(in) + L-histidyl-[protein]. In terms of biological role, the phosphoenolpyruvate-dependent sugar phosphotransferase system (sugar PTS), a major carbohydrate active transport system, catalyzes the phosphorylation of incoming sugar substrates concomitantly with their translocation across the cell membrane. The enzyme II FruAB PTS system is involved in fructose transport. The protein is PTS system fructose-specific EIIB'BC component of Haemophilus influenzae (strain ATCC 51907 / DSM 11121 / KW20 / Rd).